The following is a 305-amino-acid chain: Protein-methionine-sulfoxide reductase catalytic subunit MsrP (305 aa).

Positions 1 to 54 form a signal peptide, tat-type signal; that stretch reads MLIRKPADHLPSEITSESVYFNRRQFMAGAAGLLLSAETLAGLAAKKSPLSQLA. Mo-molybdopterin-binding positions include N69, 72-73, C126, T161, N209, R214, and 225-227; these read YE and SIK.

It belongs to the MsrP family. In terms of assembly, heterodimer of a catalytic subunit (MsrP) and a heme-binding subunit (MsrQ). The cofactor is Mo-molybdopterin. Predicted to be exported by the Tat system. The position of the signal peptide cleavage has not been experimentally proven.

Its subcellular location is the periplasm. It catalyses the reaction L-methionyl-[protein] + a quinone + H2O = L-methionyl-(S)-S-oxide-[protein] + a quinol. The enzyme catalyses L-methionyl-[protein] + a quinone + H2O = L-methionyl-(R)-S-oxide-[protein] + a quinol. Its function is as follows. Part of the MsrPQ system that repairs oxidized periplasmic proteins containing methionine sulfoxide residues (Met-O), using respiratory chain electrons. Thus protects these proteins from oxidative-stress damage caused by reactive species of oxygen and chlorine generated by the host defense mechanisms. MsrPQ is essential for the maintenance of envelope integrity under bleach stress, rescuing a wide series of structurally unrelated periplasmic proteins from methionine oxidation. The catalytic subunit MsrP is non-stereospecific, being able to reduce both (R-) and (S-) diastereoisomers of methionine sulfoxide. This is Protein-methionine-sulfoxide reductase catalytic subunit MsrP from Chromobacterium violaceum (strain ATCC 12472 / DSM 30191 / JCM 1249 / CCUG 213 / NBRC 12614 / NCIMB 9131 / NCTC 9757 / MK).